We begin with the raw amino-acid sequence, 373 residues long: Protein SENSITIVE TO PROTON RHIZOTOXICITY 2 (373 aa).

C2H2-type zinc fingers lie at residues 217-239 (HYCQ…MRAH) and 327-362 (KHCG…VPAH).

As to expression, expressed at low levels in roots (e.g. root tips and lateral roots), leaves (e.g. at the edge of mature leaves, possibly in hydathodes, and in vascular bundles), flowers (e.g. floral filaments), stems, siliques and cotyledons.

The protein localises to the nucleus. In terms of biological role, probable transcription factor. Together with STOP1, plays a critical role in tolerance to major stress factors in acid soils such as proton H(+) and aluminum ion Al(3+). Required for the expression of genes in response to acidic stress (e.g. ALMT1 and MATE), and Al-activated citrate exudation. The polypeptide is Protein SENSITIVE TO PROTON RHIZOTOXICITY 2 (Arabidopsis thaliana (Mouse-ear cress)).